Consider the following 50-residue polypeptide: Large ribosomal subunit protein bL32 (50 aa).

Basic residues predominate over residues 1-26; that stretch reads MAVPKRRVSHTRSAKRRTHYKITLKK. Residues 1–50 are disordered; the sequence is MAVPKRRVSHTRSAKRRTHYKITLKKPVKDSDGSWKMPHMVNPNTGEYKN.

The protein belongs to the bacterial ribosomal protein bL32 family.

This Aliarcobacter butzleri (strain RM4018) (Arcobacter butzleri) protein is Large ribosomal subunit protein bL32.